The following is a 78-amino-acid chain: uncharacterized protein (78 aa).

The segment at 49 to 78 is disordered; it reads QRASLERSNSIRNLQSQGKRRSDSKESRKL. A compositionally biased stretch (polar residues) spans 54–65; sequence ERSNSIRNLQSQ. Residues 68 to 78 are compositionally biased toward basic and acidic residues; that stretch reads RRSDSKESRKL.

This is an uncharacterized protein from Saccharomyces cerevisiae (strain ATCC 204508 / S288c) (Baker's yeast).